An 80-amino-acid polypeptide reads, in one-letter code: MKRILIALVRFYQRFISPVFPPSCRFELTCSNYMIQAIEKHGFKGVLMGLARILRCHPWSKTGKDPIPDHFSLKRNQEGE.

Residues K61–E80 form a disordered region. Basic and acidic residues predominate over residues T62–E80.

This sequence belongs to the UPF0161 family.

It is found in the cell membrane. Functionally, could be involved in insertion of integral membrane proteins into the membrane. This Streptococcus pneumoniae (strain CGSP14) protein is Putative membrane protein insertion efficiency factor.